Consider the following 692-residue polypeptide: ATP-dependent RNA helicase MSS116, mitochondrial (692 aa).

A mitochondrion-targeting transit peptide spans 1 to 37; the sequence is MMIARFGKQVLRKNVLVSNRIHFPVISRGFHNSFINK. Positions 82–113 are disordered; the sequence is SQVTEQTELTKSEEEEKKKKNINTNTNKNDRK. The segment covering 89–99 has biased composition (basic and acidic residues); sequence ELTKSEEEEKK. The short motif at 130 to 158 is the Q motif element; it reads DFKNTGLIDDVILRALDRAHFKDLTPIQQ. The Helicase ATP-binding domain maps to 162–349; sequence VPLLETERGM…KQHINKKYDY (188 aa). Residue 175 to 182 coordinates ATP; it reads AKTGTGKT. A DEAD box motif is present at residues 290-293; it reads DEAD. Positions 384–534 constitute a Helicase C-terminal domain; it reads YVNQLVKDSP…QVHESSEIDN (151 aa). Residues 643–692 form a disordered region; the sequence is NRYSGGGGNRSEKRFSFAGRGGNSGGHSGRGRGGRSGYSGGRSSQYSDWE. Residues 661-670 are compositionally biased toward gly residues; sequence GRGGNSGGHS.

It belongs to the DEAD box helicase family. DDX18/HAS1 subfamily.

Its subcellular location is the mitochondrion matrix. It catalyses the reaction ATP + H2O = ADP + phosphate + H(+). ATP-dependent RNA helicase required for mitochondrial splicing of group I and II introns. Also required for efficient mitochondrial translation. This chain is ATP-dependent RNA helicase MSS116, mitochondrial (MSS116), found in Lodderomyces elongisporus (strain ATCC 11503 / CBS 2605 / JCM 1781 / NBRC 1676 / NRRL YB-4239) (Yeast).